The following is a 138-amino-acid chain: Putative pre-16S rRNA nuclease (138 aa).

Belongs to the YqgF nuclease family.

It localises to the cytoplasm. In terms of biological role, could be a nuclease involved in processing of the 5'-end of pre-16S rRNA. The sequence is that of Putative pre-16S rRNA nuclease from Listeria monocytogenes serotype 4b (strain CLIP80459).